Consider the following 551-residue polypeptide: Formate--tetrahydrofolate ligase (551 aa).

Position 61-68 (Thr-61–Ser-68) interacts with ATP.

It belongs to the formate--tetrahydrofolate ligase family.

The enzyme catalyses (6S)-5,6,7,8-tetrahydrofolate + formate + ATP = (6R)-10-formyltetrahydrofolate + ADP + phosphate. The protein operates within one-carbon metabolism; tetrahydrofolate interconversion. This is Formate--tetrahydrofolate ligase from Lactiplantibacillus plantarum (strain ATCC BAA-793 / NCIMB 8826 / WCFS1) (Lactobacillus plantarum).